The sequence spans 149 residues: 3-dehydroquinate dehydratase (149 aa).

Tyrosine 26 acts as the Proton acceptor in catalysis. Substrate is bound by residues asparagine 77, histidine 83, and aspartate 90. Histidine 103 serves as the catalytic Proton donor. Residues 104 to 105 (LS) and arginine 114 contribute to the substrate site.

This sequence belongs to the type-II 3-dehydroquinase family. As to quaternary structure, homododecamer.

The catalysed reaction is 3-dehydroquinate = 3-dehydroshikimate + H2O. The protein operates within metabolic intermediate biosynthesis; chorismate biosynthesis; chorismate from D-erythrose 4-phosphate and phosphoenolpyruvate: step 3/7. In terms of biological role, catalyzes a trans-dehydration via an enolate intermediate. In Vibrio parahaemolyticus serotype O3:K6 (strain RIMD 2210633), this protein is 3-dehydroquinate dehydratase.